The primary structure comprises 165 residues: NAD(P)H-quinone oxidoreductase subunit J, chloroplastic (165 aa).

This sequence belongs to the complex I 30 kDa subunit family. In terms of assembly, NDH is composed of at least 16 different subunits, 5 of which are encoded in the nucleus.

Its subcellular location is the plastid. The protein localises to the chloroplast thylakoid membrane. It carries out the reaction a plastoquinone + NADH + (n+1) H(+)(in) = a plastoquinol + NAD(+) + n H(+)(out). The enzyme catalyses a plastoquinone + NADPH + (n+1) H(+)(in) = a plastoquinol + NADP(+) + n H(+)(out). Its function is as follows. NDH shuttles electrons from NAD(P)H:plastoquinone, via FMN and iron-sulfur (Fe-S) centers, to quinones in the photosynthetic chain and possibly in a chloroplast respiratory chain. The immediate electron acceptor for the enzyme in this species is believed to be plastoquinone. Couples the redox reaction to proton translocation, and thus conserves the redox energy in a proton gradient. The protein is NAD(P)H-quinone oxidoreductase subunit J, chloroplastic of Ipomoea purpurea (Common morning glory).